Here is a 201-residue protein sequence, read N- to C-terminus: Cytochrome c oxidase assembly protein CtaG (201 aa).

The Cytoplasmic portion of the chain corresponds to 1–13; sequence MTDQGENEKKQRR. Residues 14-36 traverse the membrane as a helical; Signal-anchor for type II membrane protein segment; it reads SNATIAVACLSFFVCMIGAAYAS. Topologically, residues 37-201 are periplasmic; sequence VPLYRIFCQV…KAVGSTRNGG (165 aa).

The protein belongs to the COX11/CtaG family.

The protein resides in the cell inner membrane. In terms of biological role, exerts its effect at some terminal stage of cytochrome c oxidase synthesis, probably by being involved in the insertion of the copper B into subunit I. The sequence is that of Cytochrome c oxidase assembly protein CtaG from Brucella suis (strain ATCC 23445 / NCTC 10510).